Consider the following 460-residue polypeptide: ATP synthase subunit beta (460 aa).

149-156 (GGAGVGKT) lines the ATP pocket.

This sequence belongs to the ATPase alpha/beta chains family. F-type ATPases have 2 components, CF(1) - the catalytic core - and CF(0) - the membrane proton channel. CF(1) has five subunits: alpha(3), beta(3), gamma(1), delta(1), epsilon(1). CF(0) has three main subunits: a(1), b(2) and c(9-12). The alpha and beta chains form an alternating ring which encloses part of the gamma chain. CF(1) is attached to CF(0) by a central stalk formed by the gamma and epsilon chains, while a peripheral stalk is formed by the delta and b chains.

It localises to the cell inner membrane. It catalyses the reaction ATP + H2O + 4 H(+)(in) = ADP + phosphate + 5 H(+)(out). Functionally, produces ATP from ADP in the presence of a proton gradient across the membrane. The catalytic sites are hosted primarily by the beta subunits. This is ATP synthase subunit beta from Nitrosomonas europaea (strain ATCC 19718 / CIP 103999 / KCTC 2705 / NBRC 14298).